The chain runs to 328 residues: LOB domain-containing protein 27 (328 aa).

The LOB domain maps to 35–136 (GACAACKYQR…EELKAVNSQL (102 aa)).

Belongs to the LOB domain-containing protein family.

This chain is LOB domain-containing protein 27 (LBD27), found in Arabidopsis thaliana (Mouse-ear cress).